Reading from the N-terminus, the 595-residue chain is E3 ubiquitin-protein ligase synoviolin B (595 aa).

Residues Met-1 to Leu-19 form a helical membrane-spanning segment. At Lys-20–Pro-35 the chain is on the lumenal side. Residues Ser-36–Gly-56 form a helical membrane-spanning segment. Over Lys-57 to Asp-92 the chain is Cytoplasmic. Residues Phe-93–Leu-113 traverse the membrane as a helical segment. Over Ala-114–Trp-129 the chain is Lumenal. Residues Leu-130–Val-150 form a helical membrane-spanning segment. The Cytoplasmic segment spans residues Ser-151–Ser-163. Residues Val-164–Ile-184 traverse the membrane as a helical segment. Residues Lys-185 to Val-218 lie on the Lumenal side of the membrane. The chain crosses the membrane as a helical span at residues Leu-219–Ile-239. An interaction with p53/TP53 region spans residues Lys-230–Arg-264. Residues Arg-240 to Gln-595 are Cytoplasmic-facing. Residues Cys-285, Cys-288, Cys-301, His-303, His-306, Cys-309, Cys-320, and Cys-323 each contribute to the Zn(2+) site. Residues Cys-285 to Arg-324 form an RING-type; atypical zinc finger. Positions Gln-335 to Thr-353 are enriched in low complexity. Disordered stretches follow at residues Gln-335 to Phe-370 and Pro-386 to Ala-426. Pro residues predominate over residues Pro-354–Phe-370. Over residues Ala-390–Ser-408 the composition is skewed to low complexity. Residues Glu-463 to Met-494 are a coiled coil. The interval Pro-509–Gln-595 is disordered. The span at Val-514–Ser-552 shows a compositional bias: low complexity.

The protein belongs to the HRD1 family. Homodimer.

It is found in the endoplasmic reticulum membrane. The catalysed reaction is S-ubiquitinyl-[E2 ubiquitin-conjugating enzyme]-L-cysteine + [acceptor protein]-L-lysine = [E2 ubiquitin-conjugating enzyme]-L-cysteine + N(6)-ubiquitinyl-[acceptor protein]-L-lysine.. Its pathway is protein modification; protein ubiquitination. Its function is as follows. E3 ubiquitin-protein ligase which accepts ubiquitin specifically from endoplasmic reticulum-associated UBC7 E2 ligase and transfers it to substrates, promoting their degradation. Component of the endoplasmic reticulum quality control (ERQC) system also called ER-associated degradation (ERAD) involved in ubiquitin-dependent degradation of misfolded endoplasmic reticulum proteins. Also promotes the degradation of normal but naturally short-lived proteins. Protects cells from ER stress-induced apoptosis. Sequesters p53 in the cytoplasm and promotes its degradation, thereby negatively regulating its biological function in transcription, cell cycle regulation and apoptosis. The sequence is that of E3 ubiquitin-protein ligase synoviolin B (syvn1-b) from Xenopus laevis (African clawed frog).